We begin with the raw amino-acid sequence, 282 residues long: NADPH-dependent 7-cyano-7-deazaguanine reductase (282 aa).

Position 88–90 (88–90 (IES)) interacts with substrate. Position 90–91 (90–91 (SK)) interacts with NADPH. Catalysis depends on cysteine 190, which acts as the Thioimide intermediate. The Proton donor role is filled by aspartate 197. 229–230 (HE) contributes to the substrate binding site. Residue 258–259 (RG) coordinates NADPH.

The protein belongs to the GTP cyclohydrolase I family. QueF type 2 subfamily. As to quaternary structure, homodimer.

It localises to the cytoplasm. The enzyme catalyses 7-aminomethyl-7-carbaguanine + 2 NADP(+) = 7-cyano-7-deazaguanine + 2 NADPH + 3 H(+). Its pathway is tRNA modification; tRNA-queuosine biosynthesis. Functionally, catalyzes the NADPH-dependent reduction of 7-cyano-7-deazaguanine (preQ0) to 7-aminomethyl-7-deazaguanine (preQ1). In Salmonella schwarzengrund (strain CVM19633), this protein is NADPH-dependent 7-cyano-7-deazaguanine reductase.